Here is a 463-residue protein sequence, read N- to C-terminus: Argininosuccinate lyase (463 aa).

This sequence belongs to the lyase 1 family. Argininosuccinate lyase subfamily.

Its subcellular location is the cytoplasm. The catalysed reaction is 2-(N(omega)-L-arginino)succinate = fumarate + L-arginine. It participates in amino-acid biosynthesis; L-arginine biosynthesis; L-arginine from L-ornithine and carbamoyl phosphate: step 3/3. The sequence is that of Argininosuccinate lyase from Bradyrhizobium sp. (strain ORS 278).